The sequence spans 885 residues: Protein arg11, mitochondrial (885 aa).

The transit peptide at 1-59 directs the protein to the mitochondrion; it reads MLIELQQIVKSGLVRNGAKHCTKRSLLCSNASVIASKRFQGSFAPGQQQPLNPLAKPIE. An N-acetyltransferase domain is found at 346–499; that stretch reads FVINKHDSLD…SDKPFADAII (154 aa). Residues 503-523 show a composition bias toward low complexity; sequence STKPPTASSTTNNPSSSQINQ. The tract at residues 503 to 532 is disordered; that stretch reads STKPPTASSTTNNPSSSQINQKRSYSTSSL. Cys-703 is a catalytic residue.

The protein in the N-terminal section; belongs to the acetylglutamate kinase family. This sequence in the C-terminal section; belongs to the NAGSA dehydrogenase family. In terms of processing, the protein precursor is probably cleaved into the two biologically active enzymes, the kinase and the reductase.

It localises to the mitochondrion. The catalysed reaction is N-acetyl-L-glutamate 5-semialdehyde + phosphate + NADP(+) = N-acetyl-L-glutamyl 5-phosphate + NADPH + H(+). It carries out the reaction N-acetyl-L-glutamate + ATP = N-acetyl-L-glutamyl 5-phosphate + ADP. It functions in the pathway amino-acid biosynthesis; L-arginine biosynthesis; N(2)-acetyl-L-ornithine from L-glutamate: step 2/4. It participates in amino-acid biosynthesis; L-arginine biosynthesis; N(2)-acetyl-L-ornithine from L-glutamate: step 3/4. Its activity is regulated as follows. The kinase activity is inhibited by arginine. The sequence is that of Protein arg11, mitochondrial (arg11) from Schizosaccharomyces pombe (strain 972 / ATCC 24843) (Fission yeast).